We begin with the raw amino-acid sequence, 269 residues long: MNSPLEAARAAAIHAARAARARYRAGVVEPTAGRAPGMTQANMIALPREWAWDFLLYAQRNPKPCPVLDVIEAGSHATVLAEGADLRTDIPLYRVWRDGRLAGEVSDATALWAGQPDLVTFLIGCSFTFETPLQEAGIEVRHIAQGCNVPMYRTQRMRRPAGRLRGELVVSMRPVPADRVADAVSISGRFPSVHGAPVHVGDPAALGIADLARPDFGDPVEIHPGEVPVFWACGVTPQAAVMASGVPFAVTHAPGHMFITDVPDSTYHV.

This sequence belongs to the D-glutamate cyclase family.

The polypeptide is Putative hydro-lyase Aave_3512 (Paracidovorax citrulli (strain AAC00-1) (Acidovorax citrulli)).